Consider the following 227-residue polypeptide: Small ribosomal subunit protein uS5 (227 aa).

Positions 1-22 are disordered; sequence MSKRSNRSNNKNNTNKFNIENW. Residues 7–18 are compositionally biased toward low complexity; it reads RSNNKNNTNKFN. Positions 63 to 126 constitute an S5 DRBM domain; it reads LEEEVMDVNL…DAAKYNLIKV (64 aa).

The protein belongs to the universal ribosomal protein uS5 family. Part of the 30S ribosomal subunit. Contacts protein S4.

Its function is as follows. With S4 and S12 plays an important role in translational accuracy. The chain is Small ribosomal subunit protein uS5 from Methanosphaera stadtmanae (strain ATCC 43021 / DSM 3091 / JCM 11832 / MCB-3).